The chain runs to 74 residues: uncharacterized protein (74 aa).

A helical membrane pass occupies residues phenylalanine 15 to valine 32.

The protein localises to the membrane. This is an uncharacterized protein from Saccharomyces cerevisiae (strain ATCC 204508 / S288c) (Baker's yeast).